The sequence spans 163 residues: Large ribosomal subunit protein bL17 (163 aa).

Residues 127 to 163 (VAKKATRTRRSKKSAEAAAPAAVEAPATEEPKAESAE) form a disordered region. Residues 129 to 138 (KKATRTRRSK) are compositionally biased toward basic residues. Over residues 142-154 (EAAAPAAVEAPAT) the composition is skewed to low complexity.

The protein belongs to the bacterial ribosomal protein bL17 family. As to quaternary structure, part of the 50S ribosomal subunit. Contacts protein L32.

The chain is Large ribosomal subunit protein bL17 from Bacteroides thetaiotaomicron (strain ATCC 29148 / DSM 2079 / JCM 5827 / CCUG 10774 / NCTC 10582 / VPI-5482 / E50).